Consider the following 80-residue polypeptide: UPF0512 protein Q (80 aa).

The protein belongs to the UPF0512 family.

This chain is UPF0512 protein Q, found in Dictyostelium discoideum (Social amoeba).